A 335-amino-acid polypeptide reads, in one-letter code: Rho guanine nucleotide exchange factor 39 (335 aa).

The DH domain occupies 22 to 197 (KRACTARELL…SETAQRVHTI (176 aa)). The PH domain maps to 227–331 (WFLRQGWLLV…WYHSLTWAIS (105 aa)).

Strongly expressed in hepatocellular carcinoma (HCC) compared with their non-cancerous counterparts.

It is found in the cell membrane. Its function is as follows. Promotes cell proliferation. The protein is Rho guanine nucleotide exchange factor 39 (ARHGEF39) of Homo sapiens (Human).